The sequence spans 386 residues: Heat-inducible transcription repressor HrcA (386 aa).

The protein belongs to the HrcA family.

Negative regulator of class I heat shock genes (grpE-dnaK-dnaJ and groELS operons). Prevents heat-shock induction of these operons. The sequence is that of Heat-inducible transcription repressor HrcA from Chlamydia abortus (strain DSM 27085 / S26/3) (Chlamydophila abortus).